Reading from the N-terminus, the 368-residue chain is RAB6-interacting golgin (368 aa).

Disordered stretches follow at residues methionine 1–alanine 43, aspartate 55–valine 133, and lysine 302–threonine 368. Over residues glutamate 11 to arginine 27 the composition is skewed to basic and acidic residues. Pro residues predominate over residues serine 80 to leucine 89. Positions asparagine 114–valine 133 are enriched in basic and acidic residues. The stretch at arginine 145–leucine 310 forms a coiled coil. A necessary for interaction with RCHY1 region spans residues isoleucine 188–threonine 368.

This sequence belongs to the GORAB family. As to quaternary structure, interacts with RCHY1. Interacts with SCYL1 and RAB6A/RAB6. Expressed in small intestine, kidney, skeletal muscle, lung, spleen, brain and heart. High expression is observed in osteoblasts and skin; also expressed in osteoclasts albeit at lower levels.

It localises to the cytoplasm. Its subcellular location is the golgi apparatus. The chain is RAB6-interacting golgin (Gorab) from Mus musculus (Mouse).